Consider the following 635-residue polypeptide: Cerevisin (635 aa).

A signal peptide spans 1–19 (MKLENTLFTLGALGSISAA). The propeptide occupies 20-280 (LVIPNLENAA…VERDSIVEAT (261 aa)). Basic and acidic residues-rich tracts occupy residues 35–50 (INKE…VEFT), 74–85 (KGQDKESPEFNG), 94–109 (SAHE…HESS), and 126–136 (GCHENKVEEKK). Positions 35-155 (INKEDHHERP…KHHEKTLEKG (121 aa)) are disordered. Residues 137–155 (MKGKKVKGKKHHEKTLEKG) show a composition bias toward basic residues. An Inhibitor I9 domain is found at 182 to 278 (RYIIVFKRGA…DFVERDSIVE (97 aa)). In terms of domain architecture, Peptidase S8 spans 289–614 (PWGLARISHR…KQELNMDEFI (326 aa)). Active-site charge relay system residues include aspartate 325 and histidine 357. Cysteine 460 and cysteine 491 are disulfide-bonded. Serine 519 (charge relay system) is an active-site residue. The propeptide occupies 575–635 (DTPNVLIYNG…RDILDKLNII (61 aa)). Asparagine 594 is a glycosylation site (N-linked (GlcNAc...) asparagine).

This sequence belongs to the peptidase S8 family. Post-translationally, activated by N- and C-terminal proteolytic cleavage. Protease B (PrB/PRB1) processing requires at least 4 cleavages. First, the signal peptide is removed from the 76 kDa preproprotease B by signal peptidase in the ER. Then, PrB removes its own Pro-region (in trans) at the N-terminus, producing a 39 kDa form before exiting the ER. In the Golgi complex, the C-terminal Post-region of the 40 kDa proprotease B undergoes protease A (PrA/PEP4)-mediated processing to a 37 kDa intermediate, which in turn is quickly processed again by PrB in trans to yield the 31 kDa mature PrB. In terms of processing, glycosylated. Preproprotease B is a 76 kDa unglycosylated precursor that enters the endoplasmic reticulum (ER), where it receives one Asn-linked and an undetermined number of non-Asn-linked carbohydrate side chains. In the Golgi complex, the 39 kDa form becomes 40 kDa, due to elaboration of the Asn-linked side chain. The ultimate processing step removes a peptide containing the Asn-linked chain. Mature PrB has only non-Asn-linked carbohydrates.

It is found in the vacuole. It carries out the reaction Hydrolysis of proteins with broad specificity, and of Bz-Arg-OEt &gt; Ac-Tyr-OEt. Does not hydrolyze peptide amides.. In terms of biological role, vacuolar proteinase B involved in protein degradation in the vacuole. Among other substrates, acts on carboxypeptidase Y (cpY/PRC1) to activate it by processing its Pro-peptide. Required for meiosis and spore formation, and for optimal survival in stationary phase. The sequence is that of Cerevisin (PRB1) from Saccharomyces cerevisiae (strain ATCC 204508 / S288c) (Baker's yeast).